Reading from the N-terminus, the 296-residue chain is Polyamine aminopropyltransferase (296 aa).

The PABS domain maps to 5–238 (ELWYETLHAN…GIMTFAWATQ (234 aa)). Gln33 provides a ligand contact to S-methyl-5'-thioadenosine. Spermidine is bound by residues His64 and Asp88. Residues Glu108 and 140-141 (DG) contribute to the S-methyl-5'-thioadenosine site. Asp158 functions as the Proton acceptor in the catalytic mechanism. Residue 158–161 (DCTD) coordinates spermidine. Pro165 is an S-methyl-5'-thioadenosine binding site.

It belongs to the spermidine/spermine synthase family. As to quaternary structure, homodimer or homotetramer.

It is found in the cytoplasm. It carries out the reaction S-adenosyl 3-(methylsulfanyl)propylamine + putrescine = S-methyl-5'-thioadenosine + spermidine + H(+). It functions in the pathway amine and polyamine biosynthesis; spermidine biosynthesis; spermidine from putrescine: step 1/1. Functionally, catalyzes the irreversible transfer of a propylamine group from the amino donor S-adenosylmethioninamine (decarboxy-AdoMet) to putrescine (1,4-diaminobutane) to yield spermidine. This Yersinia pseudotuberculosis serotype O:1b (strain IP 31758) protein is Polyamine aminopropyltransferase.